Here is a 345-residue protein sequence, read N- to C-terminus: Phosphoribosylformylglycinamidine cyclo-ligase (345 aa).

The protein belongs to the AIR synthase family.

The protein localises to the cytoplasm. The enzyme catalyses 2-formamido-N(1)-(5-O-phospho-beta-D-ribosyl)acetamidine + ATP = 5-amino-1-(5-phospho-beta-D-ribosyl)imidazole + ADP + phosphate + H(+). The protein operates within purine metabolism; IMP biosynthesis via de novo pathway; 5-amino-1-(5-phospho-D-ribosyl)imidazole from N(2)-formyl-N(1)-(5-phospho-D-ribosyl)glycinamide: step 2/2. The polypeptide is Phosphoribosylformylglycinamidine cyclo-ligase (Chromobacterium violaceum (strain ATCC 12472 / DSM 30191 / JCM 1249 / CCUG 213 / NBRC 12614 / NCIMB 9131 / NCTC 9757 / MK)).